A 470-amino-acid polypeptide reads, in one-letter code: MDVLFEDNAPLSPTTSSLMPSNGDPRLYGNDLNAGDANTSDAFNWTVDAENRTNLSCEGCLSPPCFSLLHLQEKNWSALLTAVVIILTIAGNILVIMAVSLEKKLQNATNYFLMSLAIADMLLGFLVMPVSMLTILYGYRWPLPSKLCAVWIYLDVLFSTASIMHLCAISLDRYVAIQNPIHHSRFNSRTKAFLKIIAVWTISVGISMPIPVFGLQDDSKVFKEGSCLLADDNFVLIGSFVSFFIPLTIMVITYFLTIKSLQKEATLCVSDPGTRAKLASFSFLPQSSLSSEKLFQRSIHREPGSYGRRTMQSISNEQKACKVLGIVFFLFVVMWCPFFITNIMAVICKESCNEDIIGALLNVFVWIGYLSSAVNPLVYTLFNKTYRSAFSRYIQCQYKENKKPLQLILVNTIPALAYKSSQLQMGQKKNSKKDAKSTDNDYSMVALGKQHSEDAPTDNINTVNEKVSCV.

Residues 1–23 (MDVLFEDNAPLSPTTSSLMPSNG) form a disordered region. Residues 1 to 80 (MDVLFEDNAP…LQEKNWSALL (80 aa)) are Extracellular-facing. Over residues 10-21 (PLSPTTSSLMPS) the composition is skewed to low complexity. N-linked (GlcNAc...) asparagine glycans are attached at residues Asn38, Asn44, Asn51, and Asn54. A helical transmembrane segment spans residues 81–97 (TAVVIILTIAGNILVIM). Over 98–111 (AVSLEKKLQNATNY) the chain is Cytoplasmic. Residues 112-137 (FLMSLAIADMLLGFLVMPVSMLTILY) traverse the membrane as a helical segment. At 138 to 146 (GYRWPLPSK) the chain is on the extracellular side. Residues 147–171 (LCAVWIYLDVLFSTASIMHLCAISL) traverse the membrane as a helical segment. Cys148 and Cys227 are oxidised to a cystine. Asp155 serves as a coordination point for serotonin. Positions 172–174 (DRY) match the DRY motif; important for ligand-induced conformation changes motif. Over 172–191 (DRYVAIQNPIHHSRFNSRTK) the chain is Cytoplasmic. Residues 192-215 (AFLKIIAVWTISVGISMPIPVFGL) traverse the membrane as a helical segment. Topologically, residues 216–232 (QDDSKVFKEGSCLLADD) are extracellular. Residues 233-258 (NFVLIGSFVSFFIPLTIMVITYFLTI) form a helical membrane-spanning segment. At 259–321 (KSLQKEATLC…QSISNEQKAC (63 aa)) the chain is on the cytoplasmic side. At Ser280 the chain carries Phosphoserine. A helical transmembrane segment spans residues 322–347 (KVLGIVFFLFVVMWCPFFITNIMAVI). Asn342 is a binding site for serotonin. Cys348 and Cys352 are disulfide-bonded. At 348–355 (CKESCNED) the chain is on the extracellular side. The chain crosses the membrane as a helical span at residues 356-381 (IIGALLNVFVWIGYLSSAVNPLVYTL). Positions 375–379 (NPLVY) match the NPxxY motif; important for ligand-induced conformation changes and signaling motif. Residues 382 to 470 (FNKTYRSAFS…NTVNEKVSCV (89 aa)) lie on the Cytoplasmic side of the membrane. The PDZ-binding signature appears at 468–470 (SCV).

It belongs to the G-protein coupled receptor 1 family. As to quaternary structure, interacts (via C-terminus) with MPDZ and PATJ. May interact (via C-terminus) with MPP3, PRDX6, DLG4, DLG1, CASK, APBA1 and MAGI2. Interacts with GRM2 and DRD2; this may affect signaling. Ubiquitous.

It is found in the cell membrane. It localises to the cell projection. The protein resides in the dendrite. The protein localises to the axon. Its subcellular location is the cytoplasmic vesicle. It is found in the membrane. It localises to the caveola. The protein resides in the presynapse. G-protein coupled receptor activity is regulated by lipids: oleamide increases HTR2A-mediated activity. G-protein coupled receptor for 5-hydroxytryptamine (serotonin). Also functions as a receptor for various drugs and psychoactive substances, including mescaline, psilocybin, 1-(2,5-dimethoxy-4-iodophenyl)-2-aminopropane (DOI) and lysergic acid diethylamide (LSD). Ligand binding causes a conformation change that triggers signaling via guanine nucleotide-binding proteins (G proteins) and modulates the activity of downstream effectors. HTR2A is coupled to G(q)/G(11) G alpha proteins and activates phospholipase C-beta, releasing diacylglycerol (DAG) and inositol 1,4,5-trisphosphate (IP3) second messengers that modulate the activity of phosphatidylinositol 3-kinase and promote the release of Ca(2+) ions from intracellular stores, respectively. Beta-arrestin family members inhibit signaling via G proteins and mediate activation of alternative signaling pathways. Affects neural activity, perception, cognition and mood. Plays a role in the regulation of behavior, including responses to anxiogenic situations and psychoactive substances. Plays a role in intestinal smooth muscle contraction, and may play a role in arterial vasoconstriction. The sequence is that of 5-hydroxytryptamine receptor 2A (HTR2A) from Canis lupus familiaris (Dog).